The following is a 1011-amino-acid chain: Multiple C2 domain and transmembrane region protein 7 (1011 aa).

A C2 1 domain is found at Met1–Phe110. A compositionally biased stretch (polar residues) spans Gln178–Ala195. The tract at residues Gln178–His201 is disordered. C2 domains are found at residues Ile261–Tyr381, Val421–Tyr546, and Tyr587–Tyr709. Residues Asp294, Asp300, Asp347, Asp349, and Asp354 each coordinate Ca(2+). The next 3 helical transmembrane spans lie at Met812–Trp832, Leu846–Ile866, and Ile954–Val974.

Belongs to the MCTP family. The cofactor is Ca(2+). In terms of tissue distribution, accumulates specifically in hydathodes. Restricted the basal meristem of roots. Observed in flowers.

The protein localises to the membrane. It localises to the vesicle. The protein resides in the endosome membrane. Its function is as follows. May function as a signaling molecule by regulating the trafficking of other regulators. The chain is Multiple C2 domain and transmembrane region protein 7 from Arabidopsis thaliana (Mouse-ear cress).